We begin with the raw amino-acid sequence, 126 residues long: Membrane-anchored ubiquitin-fold protein 2 (126 aa).

A Ubiquitin-like domain is found at 14-79 (VEVRFRLDDG…VLENNRTLAE (66 aa)). Residue Cys-123 is modified to Cysteine methyl ester. Cys-123 carries the S-geranylgeranyl cysteine lipid modification. A propeptide spans 124–126 (TIL) (removed in mature form).

Its subcellular location is the cell membrane. Functionally, may serve as docking site to facilitate the association of other proteins to the plasma membrane. The protein is Membrane-anchored ubiquitin-fold protein 2 (MUB2) of Oryza sativa subsp. japonica (Rice).